Consider the following 273-residue polypeptide: 4-hydroxy-tetrahydrodipicolinate reductase (273 aa).

NAD(+) contacts are provided by residues 12–17 (GAGGRM) and glutamate 38. Residue arginine 39 participates in NADP(+) binding. NAD(+)-binding positions include 102–104 (GTT) and 126–129 (AANF). Histidine 159 functions as the Proton donor/acceptor in the catalytic mechanism. A (S)-2,3,4,5-tetrahydrodipicolinate-binding site is contributed by histidine 160. Lysine 163 acts as the Proton donor in catalysis. Residue 169 to 170 (GT) coordinates (S)-2,3,4,5-tetrahydrodipicolinate.

This sequence belongs to the DapB family. As to quaternary structure, homotetramer.

It is found in the cytoplasm. The catalysed reaction is (S)-2,3,4,5-tetrahydrodipicolinate + NAD(+) + H2O = (2S,4S)-4-hydroxy-2,3,4,5-tetrahydrodipicolinate + NADH + H(+). It carries out the reaction (S)-2,3,4,5-tetrahydrodipicolinate + NADP(+) + H2O = (2S,4S)-4-hydroxy-2,3,4,5-tetrahydrodipicolinate + NADPH + H(+). Its pathway is amino-acid biosynthesis; L-lysine biosynthesis via DAP pathway; (S)-tetrahydrodipicolinate from L-aspartate: step 4/4. Its function is as follows. Catalyzes the conversion of 4-hydroxy-tetrahydrodipicolinate (HTPA) to tetrahydrodipicolinate. The polypeptide is 4-hydroxy-tetrahydrodipicolinate reductase (Salmonella schwarzengrund (strain CVM19633)).